Here is a 158-residue protein sequence, read N- to C-terminus: 2-C-methyl-D-erythritol 2,4-cyclodiphosphate synthase (158 aa).

A divalent metal cation contacts are provided by Asp9 and His11. 4-CDP-2-C-methyl-D-erythritol 2-phosphate is bound by residues 9–11 (DVH) and 35–36 (HS). Position 43 (His43) interacts with a divalent metal cation. Residues 57 to 59 (DIG), 62 to 66 (FPDTD), 101 to 107 (AQKPKMA), 133 to 136 (TTTE), Phe140, and Arg143 contribute to the 4-CDP-2-C-methyl-D-erythritol 2-phosphate site.

Belongs to the IspF family. As to quaternary structure, homotrimer. The cofactor is a divalent metal cation.

It carries out the reaction 4-CDP-2-C-methyl-D-erythritol 2-phosphate = 2-C-methyl-D-erythritol 2,4-cyclic diphosphate + CMP. Its pathway is isoprenoid biosynthesis; isopentenyl diphosphate biosynthesis via DXP pathway; isopentenyl diphosphate from 1-deoxy-D-xylulose 5-phosphate: step 4/6. Its function is as follows. Involved in the biosynthesis of isopentenyl diphosphate (IPP) and dimethylallyl diphosphate (DMAPP), two major building blocks of isoprenoid compounds. Catalyzes the conversion of 4-diphosphocytidyl-2-C-methyl-D-erythritol 2-phosphate (CDP-ME2P) to 2-C-methyl-D-erythritol 2,4-cyclodiphosphate (ME-CPP) with a corresponding release of cytidine 5-monophosphate (CMP). This chain is 2-C-methyl-D-erythritol 2,4-cyclodiphosphate synthase, found in Bacillus licheniformis (strain ATCC 14580 / DSM 13 / JCM 2505 / CCUG 7422 / NBRC 12200 / NCIMB 9375 / NCTC 10341 / NRRL NRS-1264 / Gibson 46).